The primary structure comprises 226 residues: DNA mismatch repair protein MutH (226 aa).

The protein belongs to the MutH family.

It localises to the cytoplasm. In terms of biological role, sequence-specific endonuclease that cleaves unmethylated GATC sequences. It is involved in DNA mismatch repair. The protein is DNA mismatch repair protein MutH of Vibrio parahaemolyticus serotype O3:K6 (strain RIMD 2210633).